A 106-amino-acid polypeptide reads, in one-letter code: Large ribosomal subunit protein eL42 (106 aa).

It belongs to the eukaryotic ribosomal protein eL42 family.

The chain is Large ribosomal subunit protein eL42 (RPL44) from Wickerhamomyces ciferrii (strain ATCC 14091 / BCRC 22168 / CBS 111 / JCM 3599 / NBRC 0793 / NRRL Y-1031 F-60-10) (Yeast).